A 558-amino-acid chain; its full sequence is DEAD-box ATP-dependent RNA helicase 49 (558 aa).

The Q motif motif lies at 16 to 44 (FSELKPPLSEDIIEALDRSGFEVCTPVQA). One can recognise a Helicase ATP-binding domain in the interval 47–226 (IPFLCSHKDV…KAGLRNAMEV (180 aa)). 60-67 (AATGSGKT) provides a ligand contact to ATP. The short motif at 174-177 (DEAD) is the DEAD box element. One can recognise a Helicase C-terminal domain in the interval 255–402 (QLVHLLIENK…ERKCSENASD (148 aa)). A disordered region spans residues 506 to 558 (KDKLQQEKRGKRKKSSKEAVDDSNKASRKRKLTGRQRQTIQTAQDEEEMNLRL). Over residues 521–530 (SKEAVDDSNK) the composition is skewed to basic and acidic residues. Acidic residues predominate over residues 549–558 (QDEEEMNLRL).

The protein belongs to the DEAD box helicase family. DDX55/SPB4 subfamily.

It carries out the reaction ATP + H2O = ADP + phosphate + H(+). The polypeptide is DEAD-box ATP-dependent RNA helicase 49 (RH49) (Arabidopsis thaliana (Mouse-ear cress)).